The sequence spans 351 residues: Glycerol-1-phosphate dehydrogenase [NAD(P)+] (351 aa).

NAD(+) contacts are provided by residues 98 to 102 (GSIID) and 120 to 123 (TTAS). D125 is a substrate binding site. NAD(+) is bound at residue S129. Residue D172 participates in substrate binding. The Zn(2+) site is built by D172 and H252. H256 serves as a coordination point for substrate. Position 268 (H268) interacts with Zn(2+).

The protein belongs to the glycerol-1-phosphate dehydrogenase family. Zn(2+) serves as cofactor.

It is found in the cytoplasm. It carries out the reaction sn-glycerol 1-phosphate + NAD(+) = dihydroxyacetone phosphate + NADH + H(+). The enzyme catalyses sn-glycerol 1-phosphate + NADP(+) = dihydroxyacetone phosphate + NADPH + H(+). It participates in membrane lipid metabolism; glycerophospholipid metabolism. In terms of biological role, catalyzes the NAD(P)H-dependent reduction of dihydroxyacetonephosphate (DHAP or glycerone phosphate) to glycerol 1-phosphate (G1P). The G1P thus generated is used as the glycerophosphate backbone of phospholipids in the cellular membranes of Archaea. The chain is Glycerol-1-phosphate dehydrogenase [NAD(P)+] from Thermococcus kodakarensis (strain ATCC BAA-918 / JCM 12380 / KOD1) (Pyrococcus kodakaraensis (strain KOD1)).